Here is a 123-residue protein sequence, read N- to C-terminus: Large ribosomal subunit protein bL12 (123 aa).

Belongs to the bacterial ribosomal protein bL12 family. In terms of assembly, homodimer. Part of the ribosomal stalk of the 50S ribosomal subunit. Forms a multimeric L10(L12)X complex, where L10 forms an elongated spine to which 2 to 4 L12 dimers bind in a sequential fashion. Binds GTP-bound translation factors.

Functionally, forms part of the ribosomal stalk which helps the ribosome interact with GTP-bound translation factors. Is thus essential for accurate translation. The sequence is that of Large ribosomal subunit protein bL12 from Bartonella tribocorum (strain CIP 105476 / IBS 506).